Consider the following 251-residue polypeptide: uncharacterized protein (251 aa).

ATP is bound at residue 36–43 (GKQGTGKT). Residues 230 to 251 (SDNKTENPSNPSLLTKIDDVTR) are disordered.

Its function is as follows. This protein may be involved in virus assembly. Essential for virus function. This is an uncharacterized protein from Sulfolobus spindle-shape virus 1 (SSV1).